Reading from the N-terminus, the 235-residue chain is Ubiquinone/menaquinone biosynthesis C-methyltransferase UbiE (235 aa).

S-adenosyl-L-methionine is bound by residues T60, D81, and S126.

The protein belongs to the class I-like SAM-binding methyltransferase superfamily. MenG/UbiE family.

It carries out the reaction a 2-demethylmenaquinol + S-adenosyl-L-methionine = a menaquinol + S-adenosyl-L-homocysteine + H(+). The enzyme catalyses a 2-methoxy-6-(all-trans-polyprenyl)benzene-1,4-diol + S-adenosyl-L-methionine = a 5-methoxy-2-methyl-3-(all-trans-polyprenyl)benzene-1,4-diol + S-adenosyl-L-homocysteine + H(+). It functions in the pathway quinol/quinone metabolism; menaquinone biosynthesis; menaquinol from 1,4-dihydroxy-2-naphthoate: step 2/2. Its pathway is cofactor biosynthesis; ubiquinone biosynthesis. Methyltransferase required for the conversion of demethylmenaquinol (DMKH2) to menaquinol (MKH2) and the conversion of 2-polyprenyl-6-methoxy-1,4-benzoquinol (DDMQH2) to 2-polyprenyl-3-methyl-6-methoxy-1,4-benzoquinol (DMQH2). This chain is Ubiquinone/menaquinone biosynthesis C-methyltransferase UbiE, found in Citrifermentans bemidjiense (strain ATCC BAA-1014 / DSM 16622 / JCM 12645 / Bem) (Geobacter bemidjiensis).